The primary structure comprises 846 residues: Patched domain-containing protein 4 (846 aa).

The next 10 membrane-spanning stretches (helical) occupy residues 41-61 (HPVF…LSAL), 230-250 (SILA…TATL), 265-285 (GLLG…IFFI), 293-313 (TLLG…FELL), 336-356 (VMVT…MGAS), 373-393 (VSIL…LVFA), 465-485 (PFVV…CLQI), 660-680 (PVLI…FLVI), 686-706 (FWLI…MTLW), and 718-738 (LIYT…TFVL). Residues 233–392 (ARSKVLVSLV…FSFFGSCLVF (160 aa)) enclose the SSD domain. N762 is a glycosylation site (N-linked (GlcNAc...) asparagine). 2 helical membrane passes run 765–785 (SFLI…FTLF) and 787–807 (CLLL…PVFL).

This sequence belongs to the patched family.

The protein resides in the membrane. Functionally, could act as a repressor of canonical hedgehog signaling by antagonizing the effects of SMO, as suggested by down-regulation of hedgehog target genes, including GLI1, PTCH1, and PTCH2 in PTCHD4-expressing cells. This chain is Patched domain-containing protein 4 (PTCHD4), found in Homo sapiens (Human).